A 1380-amino-acid chain; its full sequence is DNA-directed RNA polymerase subunit beta (1380 aa).

It belongs to the RNA polymerase beta chain family. As to quaternary structure, the RNAP catalytic core consists of 2 alpha, 1 beta, 1 beta' and 1 omega subunit. When a sigma factor is associated with the core the holoenzyme is formed, which can initiate transcription.

It catalyses the reaction RNA(n) + a ribonucleoside 5'-triphosphate = RNA(n+1) + diphosphate. Functionally, DNA-dependent RNA polymerase catalyzes the transcription of DNA into RNA using the four ribonucleoside triphosphates as substrates. The sequence is that of DNA-directed RNA polymerase subunit beta from Ehrlichia chaffeensis (strain ATCC CRL-10679 / Arkansas).